Here is a 530-residue protein sequence, read N- to C-terminus: UDP-glucuronosyltransferase 1A8 (530 aa).

Residues 1–25 form the signal peptide; it reads MAPSGCPPSLPLCVCLFLASGFAQA. Asparagine 71, asparagine 292, and asparagine 430 each carry an N-linked (GlcNAc...) asparagine glycan. A helical transmembrane segment spans residues 488–504; sequence VIGFLLAIVLTVVFIVY.

Belongs to the UDP-glycosyltransferase family. As to quaternary structure, homodimers. Homooligomer. Interacts with UGT1A1, UGT1A3, UGT1A4, UGT1A6, UGT1A7, UGT1A8, UGT1A9 and UGT1A10 to form heterodimers.

The protein resides in the endoplasmic reticulum membrane. The catalysed reaction is glucuronate acceptor + UDP-alpha-D-glucuronate = acceptor beta-D-glucuronoside + UDP + H(+). The enzyme catalyses 17beta-estradiol + UDP-alpha-D-glucuronate = 17beta-estradiol 3-O-(beta-D-glucuronate) + UDP + H(+). It carries out the reaction 17alpha-estradiol + UDP-alpha-D-glucuronate = 17alpha-estradiol 3-O-(beta-D-glucuronate) + UDP + H(+). It catalyses the reaction estrone + UDP-alpha-D-glucuronate = estrone 3-O-(beta-D-glucuronate) + UDP + H(+). The catalysed reaction is 16alpha,17alpha-estriol + UDP-alpha-D-glucuronate = 16alpha,17alpha-estriol 3-O-(beta-D-glucuronate) + UDP + H(+). The enzyme catalyses 2-hydroxy-17beta-estradiol + UDP-alpha-D-glucuronate = 2-hydroxy-17beta-estradiol 3-O-(beta-D-glucuronate) + UDP + H(+). It carries out the reaction 2-hydroxy-17beta-estradiol + UDP-alpha-D-glucuronate = 17beta-estradiol 2-O-(beta-D-glucuronate) + UDP + H(+). It catalyses the reaction 2-hydroxyestrone + UDP-alpha-D-glucuronate = 2-hydroxyestrone 3-O-(beta-D-glucuronate) + UDP + H(+). The catalysed reaction is 4-hydroxy-17beta-estradiol + UDP-alpha-D-glucuronate = 4-hydroxy-17beta-estradiol 3-O-(beta-D-glucuronate) + UDP + H(+). The enzyme catalyses 4-hydroxy-17beta-estradiol + UDP-alpha-D-glucuronate = 17beta-estradiol 4-O-(beta-D-glucuronate) + UDP + H(+). It carries out the reaction 4-hydroxyestrone + UDP-alpha-D-glucuronate = 4-hydroxyestrone 3-O-(beta-D-glucuronate) + UDP + H(+). It catalyses the reaction 4-hydroxyestrone + UDP-alpha-D-glucuronate = estrone 4-O-(beta-D-glucuronate) + UDP + H(+). The catalysed reaction is 2-methoxy-17beta-estradiol + UDP-alpha-D-glucuronate = 2-methoxy-17beta-estradiol 3-O-(beta-D-glucuronate) + UDP + H(+). The enzyme catalyses 2-methoxyestrone + UDP-alpha-D-glucuronate = 2-methoxyestrone 3-O-(beta-D-glucuronate) + UDP + H(+). It carries out the reaction 4-methoxy-17beta-estradiol + UDP-alpha-D-glucuronate = 4-methoxy-17beta-estradiol 3-O-(beta-D-glucuronate) + UDP + H(+). It catalyses the reaction 4-methoxyestrone + UDP-alpha-D-glucuronate = 4-methoxyestrone 3-O-(beta-D-glucuronate) + UDP + H(+). The catalysed reaction is 17beta-hydroxy-5alpha-androstan-3-one + UDP-alpha-D-glucuronate = 5alpha-dihydrotestosterone 17-O-(beta-D-glucuronate) + UDP + H(+). The enzyme catalyses 5alpha-dihydrotestosterone 17-O-(beta-D-glucuronate) + UDP-alpha-D-glucuronate = 5alpha-dihydrotestosterone 17-O-[beta-D-glucuronosyl-(1-&gt;2)-glucuronate] + UDP + H(+). It carries out the reaction prunetin + UDP-alpha-D-glucuronate = prunetin-4'-O-beta-D-glucuronide + UDP. It catalyses the reaction prunetin + UDP-alpha-D-glucuronate = prunetin-5-O-beta-D-glucuronide + UDP. The catalysed reaction is (E)-ferulate + UDP-alpha-D-glucuronate = (E)-4-O-(beta-D-glucuronosyl)-ferulate + UDP + H(+). The enzyme catalyses (E)-ferulate + UDP-alpha-D-glucuronate = (E)-ferulic acid beta-D-glucuronate ester + UDP. It carries out the reaction candesartan + UDP-alpha-D-glucuronate = candesartan O-beta-D-glucuronoside + UDP. It catalyses the reaction mycophenolate + UDP-alpha-D-glucuronate = mycophenolate 7-O-beta-D-glucuronide + UDP + H(+). Its function is as follows. UDP-glucuronosyltransferase (UGT) that catalyzes phase II biotransformation reactions in which lipophilic substrates are conjugated with glucuronic acid to increase the metabolite's water solubility, thereby facilitating excretion into either the urine or bile. Essential for the elimination and detoxification of drugs, xenobiotics and endogenous compounds. Catalyzes the glucuronidation of endogenous steroid hormones such as androgens and estrogens. Produces dihydrotestosterone (DHT) diglucuronide from the DHT after two subsequent glucoronidation steps. Involved in the glucuronidation of the phytochemical ferulic acid at the phenolic or the carboxylic acid group. Also catalyzes the glucuronidation of the isoflavones genistein, daidzein, glycitein, formononetin, biochanin A and prunetin, which are phytoestrogens with anticancer and cardiovascular properties. Involved in the glucuronidation of the AGTR1 angiotensin receptor antagonist caderastan, a drug which can inhibit the effect of angiotensin II. Also metabolizes mycophenolate, an immunosuppressive agent. This chain is UDP-glucuronosyltransferase 1A8, found in Rattus norvegicus (Rat).